The sequence spans 465 residues: 6-phospho-beta-glucosidase GmuD (465 aa).

Glu-170 functions as the Proton donor in the catalytic mechanism. The active-site Nucleophile is the Glu-368.

This sequence belongs to the glycosyl hydrolase 1 family.

It carries out the reaction 6-phospho-beta-D-glucosyl-(1-&gt;4)-D-glucose + H2O = D-glucose 6-phosphate + D-glucose. Phospho-beta-D-glucosidase that seems to be involved in the degradation of glucomannan. Is also capable of hydrolyzing aryl-phospho-beta-D-glucosides, although very weakly, and plays only a minor role, if any, in the degradation of these substrates in vivo. The sequence is that of 6-phospho-beta-glucosidase GmuD (gmuD) from Bacillus subtilis (strain 168).